The sequence spans 199 residues: MAP6 domain-containing protein 1 (199 aa).

Residues Cys-5, Cys-10, and Cys-11 are each lipidated (S-palmitoyl cysteine). Positions 33-110 are disordered; the sequence is YSDLDSEEPG…SAQSSAPPAP (78 aa). Ser-38 bears the Phosphoserine mark. 2 mn regions span residues 130-143 and 165-177; these read TTSY…WTGV and DSSP…VPEV. Position 167 is a phosphoserine (Ser-167).

It belongs to the STOP family. In terms of assembly, interacts with calmodulin. Palmitoylated. Palmitoylation enhances association with microtubules.

It is found in the golgi apparatus. The protein localises to the cytoplasm. The protein resides in the cytoskeleton. Its function is as follows. May have microtubule-stabilizing activity. The sequence is that of MAP6 domain-containing protein 1 (MAP6D1) from Homo sapiens (Human).